The primary structure comprises 79 residues: Protein SIP18 (79 aa).

Residues 1-79 (MSNMMNKFAE…DWKTYENMKK (79 aa)) form a disordered region. Residues 8-20 (FAEKLQGNDDSHQ) show a composition bias toward basic and acidic residues.

The sequence is that of Protein SIP18 (SIP18) from Saccharomyces cerevisiae (strain ATCC 204508 / S288c) (Baker's yeast).